The sequence spans 69 residues: Metallothionein-like protein 3 (69 aa).

This sequence belongs to the metallothionein superfamily. Type 15 family. As to expression, expressed in leaf mesophyll cells, root tips, and at low levels in anthers.

Functionally, metallothioneins have a high content of cysteine residues that bind various heavy metals. Functions as a metal chelator of copper (Cu) and zinc (Zn). Plays a role in Cu homeostasis, specifically in the remobilization of Cu from senescing leaves. The mobilization of Cu from internal sources is important for seed development. The protein is Metallothionein-like protein 3 of Arabidopsis thaliana (Mouse-ear cress).